The chain runs to 111 residues: Small ribosomal subunit protein uS10 (111 aa).

This sequence belongs to the universal ribosomal protein uS10 family. As to quaternary structure, part of the 30S ribosomal subunit.

Functionally, involved in the binding of tRNA to the ribosomes. This chain is Small ribosomal subunit protein uS10, found in Ehrlichia ruminantium (strain Welgevonden).